A 322-amino-acid chain; its full sequence is tRNA-dihydrouridine synthase B (322 aa).

FMN is bound by residues Pro16–Ala18 and Gln70. The active-site Proton donor is the Cys100. FMN-binding positions include Lys139, Asn200–Asp202, and Gly224–Arg225.

Belongs to the Dus family. DusB subfamily. The cofactor is FMN.

It carries out the reaction a 5,6-dihydrouridine in tRNA + NAD(+) = a uridine in tRNA + NADH + H(+). The enzyme catalyses a 5,6-dihydrouridine in tRNA + NADP(+) = a uridine in tRNA + NADPH + H(+). In terms of biological role, catalyzes the synthesis of 5,6-dihydrouridine (D), a modified base found in the D-loop of most tRNAs, via the reduction of the C5-C6 double bond in target uridines. This is tRNA-dihydrouridine synthase B from Vibrio parahaemolyticus serotype O3:K6 (strain RIMD 2210633).